Reading from the N-terminus, the 205-residue chain is Thymidylate kinase (205 aa).

Position 10–17 (10–17 (GLEGAGKS)) interacts with ATP.

The protein belongs to the thymidylate kinase family.

It catalyses the reaction dTMP + ATP = dTDP + ADP. Phosphorylation of dTMP to form dTDP in both de novo and salvage pathways of dTTP synthesis. The protein is Thymidylate kinase of Idiomarina loihiensis (strain ATCC BAA-735 / DSM 15497 / L2-TR).